The primary structure comprises 753 residues: MSQWYELQQLDSKFLEQVHQLYDDSFPMEIRQYLAQWLENQDWEHAANDVSFATIRFHDLLSQLDDQYSRFSLENNFLLQHNIRKSKRNLQDNFQEDPIQMSMIICNCLKEERKILENAQRFNQTQSGNIQSTVMLDKHKELDSKVRNVKDKVMCIEHEIKTLEDLQDEYDFKCKTLQNREHDTNGVAKNDQKQEQMLLQKMYLMLDNKRKEVVHKIIELLNVTELTQKALINDELVEWKRRQQSACIGGPPNACLDQLQNWFTIVAESLQQVRQQLKKLEELEQKYTYEHDPITKNKQALWDRTFSLFQQLIQSSFVVERQPCMPTHPQRPLVLKTGVQFTVKLRLLVKLQELNYNLKVKVLFDKDVSERNTVKGFRKFNILGTHTKVMNMEESTNGSLAAEFRHLQLKEQKNAGARTNEGPLIVTEELHSLSFETQLCQPGLVIDLETTSLPVVVISNVSQLPSGWASILWYNMLVAEPRNLSFFLNPPCARWSQLSEVLSWQFSSVTKRGLNVDQLNMLGEKLLGPTAGPDGLIPWTRFCKENINDKNFPFWLWIESILELIKKHLLSLWNDGCIVGFISKERERALLKDQQPGTFLLRFSESCREGAITFTWVERSQNGGEPYFHAVEPYTKKELSAVTFPDIIRNYKVMAAENIPENPLKYLYPNIDKDHAFGKYYSRPKEAPEPMELDGPKGTGYIKTELISVSEVHPSRLQTTDNLLPMSPEEFDEVSRMVGPVEFDMVSMTRGRS.

S2 carries the post-translational modification N-acetylserine. N6-methyllysine occurs at positions 114, 175, 296, 366, 525, and 637. Residues 136-317 are a coiled coil; that stretch reads LDKHKELDSK…LFQQLIQSSF (182 aa). In terms of domain architecture, SH2 spans 573–670; the sequence is WNDGCIVGFI…ENPLKYLYPN (98 aa). E657 carries the ADP-ribosyl glutamic acid modification. Residue K665 is modified to N6-methyllysine. Y701 is subject to Phosphotyrosine; by JAK1, JAK2 or TYK2. K703 is covalently cross-linked (Glycyl lysine isopeptide (Lys-Gly) (interchain with G-Cter in SUMO1); alternate). A Glycyl lysine isopeptide (Lys-Gly) (interchain with G-Cter in SUMO2); alternate cross-link involves residue K703. E705 carries the ADP-ribosyl glutamic acid modification. A Phosphoserine; by IKKE modification is found at S708. Residue S727 is modified to Phosphoserine; by MAPK14. Residue T749 is modified to Phosphothreonine.

The protein belongs to the transcription factor STAT family. In terms of assembly, homodimerizes upon IFN-gamma induced phosphorylation. Heterodimer with STAT2 upon IFN-alpha/beta induced phosphorylation. The heterodimer STAT1:STAT2 forms the interferon-stimulated gene factor 3 complex (ISGF3) with IRF9. Interacts (phosphorylated at Ser-727) with PIAS1; the interaction results in release of STAT1 from its target gene. Interacts with IFNAR1. Interacts with IFNAR2. Found in a complex with NMI and CREBBP/CBP. Interacts with NMI which is required for CREBBP/CBP recruitment to the complex. Interacts with PTK2/FAK1. Interacts with SRC. Interacts with ERBB4 (phosphorylated). Interacts with PARP9 and DTX3L independently of IFN-beta or IFN-gamma-mediated STAT1 'Tyr-701' phosphorylation. Interacts with histone acetyltransferase EP300/p300 in response to INF-gamma stimulation. Independently of its phosphorylation status, interacts with OTOP1. Interacts with IFNGR1. Interacts with STAT4. As to quaternary structure, (Microbial infection) Interacts with African swine fever virus (ASFV) MGF360-9L; this interaction mediates degradation of STAT1 through apoptosis. In terms of processing, phosphorylated on tyrosine and serine residues in response to a variety of cytokines/growth hormones including IFN-alpha, IFN-gamma, PDGF and EGF. Activated KIT promotes phosphorylation on tyrosine residues and subsequent translocation to the nucleus. Upon EGF stimulation, phosphorylation on Tyr-701 (lacking in beta form) by JAK1, JAK2 or TYK2 promotes dimerization and subsequent translocation to the nucleus. Growth hormone (GH) activates STAT1 signaling only via JAK2. Tyrosine phosphorylated in response to constitutively activated FGFR1, FGFR2, FGFR3 and FGFR4. Phosphorylation on Ser-727 by several kinases including MAPK14, ERK1/2 and CAMK2/CAMKII in response to IFN-gamma stimulation, is required for maximal transcriptional activity. Phosphorylated on Ser-727 by CAMK2/CAMKII in response to IFN-gamma stimulation and calcium mobilization, promoting activity. Phosphorylated by CAMK2/CAMKII in response to IFN-beta stimulation and calcium mobilization in epithelial cells, promoting activity. Phosphorylation on Ser-727 promotes sumoylation though increasing interaction with PIAS. Phosphorylation on Ser-727 by PRKCD induces apoptosis in response to DNA-damaging agents. Phosphorylated on tyrosine residues when PTK2/FAK1 is activated; most likely this is catalyzed by a SRC family kinase. Dephosphorylation on tyrosine residues by PTPN2 negatively regulates interferon-mediated signaling. Upon viral infection or IFN induction, phosphorylation on Ser-708 occurs much later than phosphorylation on Tyr-701 and is required for the binding of ISGF3 on the ISREs of a subset of IFN-stimulated genes IKBKE-dependent. Phosphorylation at Tyr-701 and Ser-708 are mutually exclusive, phosphorylation at Ser-708 requires previous dephosphorylation of Tyr-701. Phosphorylation at Thr-749 by IKBKB/IKKB promotes transcriptional activation of ARID5A and IL12B by STAT1. Phosphorylation at Thr-749 restricts interferon signaling and anti-inflammatory responses and promotes innate inflammatory responses. Post-translationally, sumoylated with SUMO1, SUMO2 and SUMO3. Sumoylation is enhanced by IFN-gamma-induced phosphorylation on Ser-727, and by interaction with PIAS proteins. Enhances the transactivation activity. ISGylated. In terms of processing, mono-ADP-ribosylated at Glu-657 and Glu-705 by PARP14; ADP-ribosylation prevents phosphorylation at Tyr-701. However, the role of ADP-ribosylation in the prevention of phosphorylation has been called into question and the lack of phosphorylation may be due to sumoylation of Lys-703. Post-translationally, monomethylated at Lys-525 by SETD2; monomethylation is necessary for phosphorylation at Tyr-701, translocation into the nucleus and activation of the antiviral defense. Deubiquitinated by USP13; leading to STAT1 stabilization and positive regulation of type I and type II IFN signalings.

It is found in the cytoplasm. It localises to the nucleus. Signal transducer and transcription activator that mediates cellular responses to interferons (IFNs), cytokine KITLG/SCF and other cytokines and other growth factors. Following type I IFN (IFN-alpha and IFN-beta) binding to cell surface receptors, signaling via protein kinases leads to activation of Jak kinases (TYK2 and JAK1) and to tyrosine phosphorylation of STAT1 and STAT2. The phosphorylated STATs dimerize and associate with ISGF3G/IRF-9 to form a complex termed ISGF3 transcription factor, that enters the nucleus. ISGF3 binds to the IFN stimulated response element (ISRE) to activate the transcription of IFN-stimulated genes (ISG), which drive the cell in an antiviral state. In response to type II IFN (IFN-gamma), STAT1 is tyrosine- and serine-phosphorylated. It then forms a homodimer termed IFN-gamma-activated factor (GAF), migrates into the nucleus and binds to the IFN gamma activated sequence (GAS) to drive the expression of the target genes, inducing a cellular antiviral state. Becomes activated in response to KITLG/SCF and KIT signaling. May mediate cellular responses to activated FGFR1, FGFR2, FGFR3 and FGFR4. Following bacterial lipopolysaccharide (LPS)-induced TLR4 endocytosis, phosphorylated at Thr-749 by IKBKB which promotes binding of STAT1 to the 5'-TTTGAGGC-3' sequence in the ARID5A promoter, resulting in transcriptional activation of ARID5A and subsequent ARID5A-mediated stabilization of IL6. Phosphorylation at Thr-749 also promotes binding of STAT1 to the 5'-TTTGAGTC-3' sequence in the IL12B promoter and activation of IL12B transcription. Involved in food tolerance in small intestine: associates with the Gasdermin-D, p13 cleavage product (13 kDa GSDMD) and promotes transcription of CIITA, inducing type 1 regulatory T (Tr1) cells in upper small intestine. This is Signal transducer and activator of transcription 1 (STAT1) from Sus scrofa (Pig).